A 645-amino-acid polypeptide reads, in one-letter code: MDKNDYLKAVDSLNLWAKAYYTDDSPMASDDEYDKLYNAVVQFEKENPDLKLSYSPTNRIGGEILDEFKKISHIEKMWSMEDIFSDSELVAWISRGDKTDCEFFAEPKFDGASLNLLYENGNLISAATRGDGSVGEDVTNNAKVISSVPLQIDYKDKIEIRGEVVITKDDFELINIERSKNSEPPLANPRNAAAGSLRQLDNGIVKQRKLKFYPWGVGENSLKFNKHSQIMDFVRSLGFLHDNFCKVIRGIDELKIAYKELLSVRELKPILMDGMVIRVNDLSKANQLGYTVKFPKFMVAYKFPATEKTARLIDILLQVGRTGVVTPVGLLDGVLIDGAFIKNVTLHNFDEIDRLNLMKNDFVTVIRSGDVIPKITGVFKDRRDGSQSEIIRPKICPKCGNELLDEGVFIKCQNLTCKARVVSSIIYFASKKCMNIDGLGDAIVELLYQKNIIKDIADIYRLDELSFIGLEGFKTKKISNLLSAINNSKTPNLDKFIASLGIEHIGEVAAKKIANNYGDRWLELTLEELLALDGFGEAMALSYLEFMRVNLEKIKELLEFITPKMQNLELKTNIFSGKTVVITGTLSRSRDEFKAELESYGAKVSSSVSKKTDFVLYGNEAGSKLEKANELGVRAIDESEYESLK.

NAD(+) is bound by residues 30–34 (DDEYD), 79–80 (SM), and Glu106. Lys108 (N6-AMP-lysine intermediate) is an active-site residue. NAD(+) is bound by residues Arg129, Glu163, and Lys302. Zn(2+) contacts are provided by Cys396, Cys399, Cys412, and Cys417. The BRCT domain occupies 570-645 (LKTNIFSGKT…IDESEYESLK (76 aa)).

Belongs to the NAD-dependent DNA ligase family. LigA subfamily. The cofactor is Mg(2+). Mn(2+) serves as cofactor.

It catalyses the reaction NAD(+) + (deoxyribonucleotide)n-3'-hydroxyl + 5'-phospho-(deoxyribonucleotide)m = (deoxyribonucleotide)n+m + AMP + beta-nicotinamide D-nucleotide.. In terms of biological role, DNA ligase that catalyzes the formation of phosphodiester linkages between 5'-phosphoryl and 3'-hydroxyl groups in double-stranded DNA using NAD as a coenzyme and as the energy source for the reaction. It is essential for DNA replication and repair of damaged DNA. The polypeptide is DNA ligase (Campylobacter fetus subsp. fetus (strain 82-40)).